A 398-amino-acid polypeptide reads, in one-letter code: Selenide, water dikinase (398 aa).

The interval 1 to 21 (MSHKRPQSSAGESNGAVDLKT) is disordered. The active site involves C46. ATP-binding positions include K49, 72–74 (GMD), D97, D120, and 171–174 (GGQT). D74 is a binding site for Mg(2+). D120 serves as a coordination point for Mg(2+). D278 contacts Mg(2+).

The protein belongs to the selenophosphate synthase 1 family. Class I subfamily. Homodimer. Requires Mg(2+) as cofactor.

It carries out the reaction hydrogenselenide + ATP + H2O = selenophosphate + AMP + phosphate + 2 H(+). Its function is as follows. Synthesizes selenophosphate from selenide and ATP. The protein is Selenide, water dikinase of Leishmania major.